Here is a 224-residue protein sequence, read N- to C-terminus: Artemin (224 aa).

The first 39 residues, 1–39 (MELGLGEPTALSHCLRPRWQPALWPTLAALALLSSVTEA), serve as a signal peptide directing secretion. A propeptide spanning residues 40–111 (SLDPMSRSPA…AALRGARAAR (72 aa)) is cleaved from the precursor. The disordered stretch occupies residues 41 to 124 (LDPMSRSPAS…RSSRARATDA (84 aa)). Residues 80–95 (RPPPQSPQPAPPPPGP) are compositionally biased toward pro residues. The span at 96 to 116 (ALQSPPAALRGARAARAGTRS) shows a compositional bias: low complexity. 3 disulfide bridges follow: C127–C192, C154–C220, and C158–C222. N206 is a glycosylation site (N-linked (GlcNAc...) asparagine).

Belongs to the TGF-beta family. GDNF subfamily. In terms of assembly, homodimer; disulfide-linked. Interacts with GFRA3 coreceptor and RET: forms a 2:2:2 ternary complex composed of ARTN ligand, GFRA3 and RET receptor. In terms of tissue distribution, cochlea. Expressed at higher level in sesorineural epithelium than in the modiolus region or substantia nigra.

It is found in the secreted. Its function is as follows. Growth factor that supports the survival of sensory and sympathetic peripheral neurons in culture and also supports the survival of dopaminergic neurons of the ventral mid-brain. Acts by binding to its coreceptor, GFRA3, leading to autophosphorylation and activation of the RET receptor. Strong attractant of gut hematopoietic cells thus promoting the formation Peyer's patch-like structures, a major component of the gut-associated lymphoid tissue. This is Artemin (Artn) from Rattus norvegicus (Rat).